A 43-amino-acid polypeptide reads, in one-letter code: Protein PsbN (43 aa).

A helical membrane pass occupies residues 4–24 (ATFVAIFISCLLISFTGYALY).

Belongs to the PsbN family.

The protein resides in the plastid. The protein localises to the chloroplast thylakoid membrane. In terms of biological role, may play a role in photosystem I and II biogenesis. This is Protein PsbN from Marchantia polymorpha (Common liverwort).